Here is a 293-residue protein sequence, read N- to C-terminus: Succinate--CoA ligase [ADP-forming] subunit alpha (293 aa).

CoA is bound by residues 21 to 24 (TGKQ), K47, and 99 to 101 (ITE). A substrate-binding site is contributed by Y162. The Tele-phosphohistidine intermediate role is filled by H249.

It belongs to the succinate/malate CoA ligase alpha subunit family. In terms of assembly, heterotetramer of two alpha and two beta subunits.

The catalysed reaction is succinate + ATP + CoA = succinyl-CoA + ADP + phosphate. The enzyme catalyses GTP + succinate + CoA = succinyl-CoA + GDP + phosphate. Its pathway is carbohydrate metabolism; tricarboxylic acid cycle; succinate from succinyl-CoA (ligase route): step 1/1. Its function is as follows. Succinyl-CoA synthetase functions in the citric acid cycle (TCA), coupling the hydrolysis of succinyl-CoA to the synthesis of either ATP or GTP and thus represents the only step of substrate-level phosphorylation in the TCA. The alpha subunit of the enzyme binds the substrates coenzyme A and phosphate, while succinate binding and nucleotide specificity is provided by the beta subunit. This chain is Succinate--CoA ligase [ADP-forming] subunit alpha, found in Methanothermobacter thermautotrophicus (strain ATCC 29096 / DSM 1053 / JCM 10044 / NBRC 100330 / Delta H) (Methanobacterium thermoautotrophicum).